The primary structure comprises 604 residues: Aspartate--tRNA(Asp/Asn) ligase (604 aa).

Glu-175 contributes to the L-aspartate binding site. The tract at residues 199–202 is aspartate; the sequence is QQFK. 2 residues coordinate L-aspartate: Arg-221 and His-456. Position 221-223 (221-223) interacts with ATP; that stretch reads RDE. Glu-496 serves as a coordination point for ATP. An L-aspartate-binding site is contributed by Arg-503. 548 to 551 lines the ATP pocket; the sequence is GVDR.

The protein belongs to the class-II aminoacyl-tRNA synthetase family. Type 1 subfamily. Homodimer.

It localises to the cytoplasm. The catalysed reaction is tRNA(Asx) + L-aspartate + ATP = L-aspartyl-tRNA(Asx) + AMP + diphosphate. Its function is as follows. Aspartyl-tRNA synthetase with relaxed tRNA specificity since it is able to aspartylate not only its cognate tRNA(Asp) but also tRNA(Asn). Reaction proceeds in two steps: L-aspartate is first activated by ATP to form Asp-AMP and then transferred to the acceptor end of tRNA(Asp/Asn). The chain is Aspartate--tRNA(Asp/Asn) ligase from Methylobacterium sp. (strain 4-46).